A 402-amino-acid chain; its full sequence is 1-deoxy-D-xylulose 5-phosphate reductoisomerase (402 aa).

NADPH contacts are provided by threonine 25, glycine 26, serine 27, valine 28, arginine 52, asparagine 53, and asparagine 136. Lysine 137 lines the 1-deoxy-D-xylulose 5-phosphate pocket. NADPH is bound at residue glutamate 138. Aspartate 162 lines the Mn(2+) pocket. Residues serine 163, glutamate 164, serine 188, and histidine 211 each coordinate 1-deoxy-D-xylulose 5-phosphate. Mn(2+) is bound at residue glutamate 164. Glycine 217 is an NADPH binding site. The 1-deoxy-D-xylulose 5-phosphate site is built by serine 224, asparagine 229, lysine 230, and glutamate 233. Position 233 (glutamate 233) interacts with Mn(2+).

It belongs to the DXR family. The cofactor is Mg(2+). Mn(2+) is required as a cofactor.

The enzyme catalyses 2-C-methyl-D-erythritol 4-phosphate + NADP(+) = 1-deoxy-D-xylulose 5-phosphate + NADPH + H(+). Its pathway is isoprenoid biosynthesis; isopentenyl diphosphate biosynthesis via DXP pathway; isopentenyl diphosphate from 1-deoxy-D-xylulose 5-phosphate: step 1/6. Its function is as follows. Catalyzes the NADPH-dependent rearrangement and reduction of 1-deoxy-D-xylulose-5-phosphate (DXP) to 2-C-methyl-D-erythritol 4-phosphate (MEP). This is 1-deoxy-D-xylulose 5-phosphate reductoisomerase from Rhodospirillum centenum (strain ATCC 51521 / SW).